We begin with the raw amino-acid sequence, 308 residues long: Probable manganese-dependent inorganic pyrophosphatase (308 aa).

6 residues coordinate Mn(2+): H9, D13, D15, D75, H97, and D149.

It belongs to the PPase class C family. The cofactor is Mn(2+).

The protein resides in the cytoplasm. It carries out the reaction diphosphate + H2O = 2 phosphate + H(+). The protein is Probable manganese-dependent inorganic pyrophosphatase of Listeria welshimeri serovar 6b (strain ATCC 35897 / DSM 20650 / CCUG 15529 / CIP 8149 / NCTC 11857 / SLCC 5334 / V8).